The following is a 398-amino-acid chain: Candidapepsin-2 (398 aa).

The N-terminal stretch at 1–18 (MFLKNIFIGLAIALLVDA) is a signal peptide. Residues 19–56 (TPTTTKRSAGFVALDFSVVKTPKAFPVTNGQEGKTSKR) constitute a propeptide, activation peptide. The 315-residue stretch at 70–384 (YAADITVGSN…DLDNNEISLA (315 aa)) folds into the Peptidase A1 domain. Residue Asp-88 is part of the active site. Position 88-90 (88-90 (DTG)) interacts with pepstatin A. Cys-103 and Cys-115 form a disulfide bridge. Pepstatin A contacts are provided by residues 141–142 (GD) and 274–278 (DSGTT). Residue Asp-274 is part of the active site. Cys-312 and Cys-350 form a disulfide bridge. Residues Asn-313 and Asn-321 are each glycosylated (N-linked (GlcNAc...) asparagine).

This sequence belongs to the peptidase A1 family. Monomer. In terms of processing, O-glycosylated.

It localises to the secreted. The catalysed reaction is Preferential cleavage at the carboxyl of hydrophobic amino acids, but fails to cleave 15-Leu-|-Tyr-16, 16-Tyr-|-Leu-17 and 24-Phe-|-Phe-25 of insulin B chain. Activates trypsinogen, and degrades keratin.. The protein is Candidapepsin-2 (SAP2) of Candida albicans (strain WO-1) (Yeast).